A 461-amino-acid polypeptide reads, in one-letter code: Chromosomal replication initiator protein DnaA (461 aa).

Positions 1–87 (MAVSLWQQCI…IGSRPSAKPV (87 aa)) are domain I, interacts with DnaA modulators. Residues 87 to 124 (VVQATAAVRTSRPVTREVTKPSFNTPHAEPMANANHRS) are domain II. Positions 99-125 (PVTREVTKPSFNTPHAEPMANANHRSN) are disordered. The segment at 125–341 (NINPTYQFDN…GALNRVIANA (217 aa)) is domain III, AAA+ region. 4 residues coordinate ATP: Gly-169, Gly-171, Lys-172, and Thr-173. The interval 342 to 461 (NFTGRPITID…YANLIRTLSS (120 aa)) is domain IV, binds dsDNA.

This sequence belongs to the DnaA family. Oligomerizes as a right-handed, spiral filament on DNA at oriC.

It localises to the cytoplasm. In terms of biological role, plays an essential role in the initiation and regulation of chromosomal replication. ATP-DnaA binds to the origin of replication (oriC) to initiate formation of the DNA replication initiation complex once per cell cycle. Binds the DnaA box (a 9 base pair repeat at the origin) and separates the double-stranded (ds)DNA. Forms a right-handed helical filament on oriC DNA; dsDNA binds to the exterior of the filament while single-stranded (ss)DNA is stabiized in the filament's interior. The ATP-DnaA-oriC complex binds and stabilizes one strand of the AT-rich DNA unwinding element (DUE), permitting loading of DNA polymerase. After initiation quickly degrades to an ADP-DnaA complex that is not apt for DNA replication. Binds acidic phospholipids. This chain is Chromosomal replication initiator protein DnaA, found in Shewanella pealeana (strain ATCC 700345 / ANG-SQ1).